The following is a 203-amino-acid chain: ESCRT-related protein CHMP1B (203 aa).

2 coiled-coil regions span residues 13–51 and 109–140; these read DLKFTSKSLQRQSRKCEKEEKAEKLKVKKAIEKGNMDGA and GNLQKMSETMDSFEKQFVNMEVQAEFMENAMA. The disordered stretch occupies residues 172–203; the sequence is PQPAGHAIPTKTEEKVDEDDLSRRLAELKARG. Positions 192–203 are enriched in basic and acidic residues; that stretch reads LSRRLAELKARG.

It belongs to the SNF7 family. Interacts with CHMP1A and LIP5. Interacts with VPS2.2.

It is found in the cytoplasm. Its subcellular location is the endosome membrane. Its function is as follows. Involved in ESCRT-dependent multivesicular body (MVB) formation and sorting of endosomal cargo proteins into MVBs. Mediates the MVB sorting of the auxin carriers PIN1, PIN2 and AUX1. Required for embryonic axis establishment and seedling growth. Required for autophagic degradation of plastid proteins. Promotes the efficient sequestration of cargo from plastids into autophagosomes. Mediates the efficient delivery of autophagic plastid bodies to the vacuole, but not into the cytoplasm. In Arabidopsis thaliana (Mouse-ear cress), this protein is ESCRT-related protein CHMP1B.